Here is a 322-residue protein sequence, read N- to C-terminus: Phosphatidylserine decarboxylase proenzyme (322 aa).

Active-site charge relay system; for autoendoproteolytic cleavage activity residues include D90, H147, and S254. The active-site Schiff-base intermediate with substrate; via pyruvic acid; for decarboxylase activity is the S254. S254 carries the pyruvic acid (Ser); by autocatalysis modification. The segment at 295 to 322 is disordered; that stretch reads VEPAPLPTEEIKAEHDASPLVDNKKDDT. Residues 303–322 show a composition bias toward basic and acidic residues; that stretch reads EEIKAEHDASPLVDNKKDDT.

Belongs to the phosphatidylserine decarboxylase family. PSD-B subfamily. Prokaryotic type I sub-subfamily. As to quaternary structure, heterodimer of a large membrane-associated beta subunit and a small pyruvoyl-containing alpha subunit. It depends on pyruvate as a cofactor. In terms of processing, is synthesized initially as an inactive proenzyme. Formation of the active enzyme involves a self-maturation process in which the active site pyruvoyl group is generated from an internal serine residue via an autocatalytic post-translational modification. Two non-identical subunits are generated from the proenzyme in this reaction, and the pyruvate is formed at the N-terminus of the alpha chain, which is derived from the carboxyl end of the proenzyme. The autoendoproteolytic cleavage occurs by a canonical serine protease mechanism, in which the side chain hydroxyl group of the serine supplies its oxygen atom to form the C-terminus of the beta chain, while the remainder of the serine residue undergoes an oxidative deamination to produce ammonia and the pyruvoyl prosthetic group on the alpha chain. During this reaction, the Ser that is part of the protease active site of the proenzyme becomes the pyruvoyl prosthetic group, which constitutes an essential element of the active site of the mature decarboxylase.

The protein localises to the cell membrane. The enzyme catalyses a 1,2-diacyl-sn-glycero-3-phospho-L-serine + H(+) = a 1,2-diacyl-sn-glycero-3-phosphoethanolamine + CO2. The protein operates within phospholipid metabolism; phosphatidylethanolamine biosynthesis; phosphatidylethanolamine from CDP-diacylglycerol: step 2/2. Functionally, catalyzes the formation of phosphatidylethanolamine (PtdEtn) from phosphatidylserine (PtdSer). This Salmonella agona (strain SL483) protein is Phosphatidylserine decarboxylase proenzyme.